The chain runs to 128 residues: ATP synthase epsilon chain (128 aa).

This sequence belongs to the ATPase epsilon chain family. As to quaternary structure, F-type ATPases have 2 components, CF(1) - the catalytic core - and CF(0) - the membrane proton channel. CF(1) has five subunits: alpha(3), beta(3), gamma(1), delta(1), epsilon(1). CF(0) has three main subunits: a, b and c.

It localises to the cell inner membrane. Functionally, produces ATP from ADP in the presence of a proton gradient across the membrane. The polypeptide is ATP synthase epsilon chain (Sulfurovum sp. (strain NBC37-1)).